Here is a 409-residue protein sequence, read N- to C-terminus: Putative competence-damage inducible protein (409 aa).

Belongs to the CinA family.

The polypeptide is Putative competence-damage inducible protein (Clostridium botulinum (strain Kyoto / Type A2)).